Reading from the N-terminus, the 603-residue chain is NADH-ubiquinone oxidoreductase chain 5 (603 aa).

16 helical membrane-spanning segments follow: residues 4–24, 38–58, 87–107, 117–137, 140–160, 171–191, 211–233, 241–261, 273–293, 301–320, 331–351, 366–386, 409–429, 457–477, 488–508, and 583–603; these read LPTLTLISLIILTSPIMLSPL, MAVSYAFMVSMVPAMIFMHSG, LIFMPVALFVTWSIMEFSLWY, FFKYLLLFLITMIILITANNL, LFIGWEGVGIMSFLLIGWWYG, AMIYNRIGDVGFVAAMAWFLL, LPLTGLLLAAMGKSAQFGLHPWL, TPVSALLHSSTMVVAGVFLLI, ILTLTLCVGAITTLFTAICAL, IIAFSTSSQLGLMMVTIGIN, THAFFKAMLFMCSGSIIHSLG, LPFTTTALIIGSLALTGMPFL, LLITFIATSMTAVYSTRIIFF, LMLGSIFAGFLISSNLPPTTV, FMALAVTLLGFALAIELSSFT, and MIKLYFLSFLISLTLGLLLII.

It belongs to the complex I subunit 5 family.

The protein localises to the mitochondrion inner membrane. The enzyme catalyses a ubiquinone + NADH + 5 H(+)(in) = a ubiquinol + NAD(+) + 4 H(+)(out). Its function is as follows. Core subunit of the mitochondrial membrane respiratory chain NADH dehydrogenase (Complex I) that is believed to belong to the minimal assembly required for catalysis. Complex I functions in the transfer of electrons from NADH to the respiratory chain. The immediate electron acceptor for the enzyme is believed to be ubiquinone. The protein is NADH-ubiquinone oxidoreductase chain 5 (MT-ND5) of Dugong dugon (Dugong).